The primary structure comprises 368 residues: 3-dehydroquinate synthase (368 aa).

NAD(+)-binding positions include 71–76 (DGESFK), 105–109 (GVIGD), 129–130 (TT), Lys-142, Lys-151, and 169–172 (TLRT). 3 residues coordinate Zn(2+): Glu-184, His-247, and His-264.

Belongs to the sugar phosphate cyclases superfamily. Dehydroquinate synthase family. Requires NAD(+) as cofactor. Co(2+) is required as a cofactor. It depends on Zn(2+) as a cofactor.

The protein resides in the cytoplasm. The enzyme catalyses 7-phospho-2-dehydro-3-deoxy-D-arabino-heptonate = 3-dehydroquinate + phosphate. It participates in metabolic intermediate biosynthesis; chorismate biosynthesis; chorismate from D-erythrose 4-phosphate and phosphoenolpyruvate: step 2/7. In terms of biological role, catalyzes the conversion of 3-deoxy-D-arabino-heptulosonate 7-phosphate (DAHP) to dehydroquinate (DHQ). This chain is 3-dehydroquinate synthase, found in Ralstonia nicotianae (strain ATCC BAA-1114 / GMI1000) (Ralstonia solanacearum).